Reading from the N-terminus, the 197-residue chain is Guanylate kinase (197 aa).

One can recognise a Guanylate kinase-like domain in the interval 7-185; it reads GLIIILSSPS…TLKKIHEIIV (179 aa). 14–21 provides a ligand contact to ATP; that stretch reads SPSGTGKS.

It belongs to the guanylate kinase family.

Its subcellular location is the cytoplasm. The catalysed reaction is GMP + ATP = GDP + ADP. Its function is as follows. Essential for recycling GMP and indirectly, cGMP. The protein is Guanylate kinase (gmk) of Rickettsia prowazekii (strain Madrid E).